We begin with the raw amino-acid sequence, 295 residues long: Fructose-bisphosphate aldolase class 1 (295 aa).

The active-site Proton acceptor is the glutamate 176. Lysine 213 serves as the catalytic Schiff-base intermediate with dihydroxyacetone-P.

Belongs to the class I fructose-bisphosphate aldolase family.

The catalysed reaction is beta-D-fructose 1,6-bisphosphate = D-glyceraldehyde 3-phosphate + dihydroxyacetone phosphate. The protein operates within carbohydrate degradation; glycolysis; D-glyceraldehyde 3-phosphate and glycerone phosphate from D-glucose: step 4/4. This chain is Fructose-bisphosphate aldolase class 1, found in Clostridium acetobutylicum (strain ATCC 824 / DSM 792 / JCM 1419 / IAM 19013 / LMG 5710 / NBRC 13948 / NRRL B-527 / VKM B-1787 / 2291 / W).